A 495-amino-acid chain; its full sequence is Steroid 21-hydroxylase (495 aa).

Residues Arg92 and Lys121 each contribute to the heme b site. 17alpha-hydroxyprogesterone is bound at residue Arg234. Residue Arg234 participates in progesterone binding. 3 residues coordinate heme b: His366, Arg427, and Cys429.

Belongs to the cytochrome P450 family. It depends on heme b as a cofactor.

It localises to the endoplasmic reticulum membrane. It is found in the microsome membrane. The enzyme catalyses progesterone + reduced [NADPH--hemoprotein reductase] + O2 = 21-hydroxyprogesterone + oxidized [NADPH--hemoprotein reductase] + H2O + H(+). It catalyses the reaction 17alpha-hydroxyprogesterone + reduced [NADPH--hemoprotein reductase] + O2 = 11-deoxycortisol + oxidized [NADPH--hemoprotein reductase] + H2O + H(+). A cytochrome P450 monooxygenase that plays a major role in adrenal steroidogenesis. Catalyzes the hydroxylation at C-21 of progesterone and 17alpha-hydroxyprogesterone to respectively form 11-deoxycorticosterone and 11-deoxycortisol, intermediate metabolites in the biosynthetic pathway of mineralocorticoids and glucocorticoids. Mechanistically, uses molecular oxygen inserting one oxygen atom into a substrate, and reducing the second into a water molecule, with two electrons provided by NADPH via cytochrome P450 reductase (CPR; NADPH-ferrihemoprotein reductase). The polypeptide is Steroid 21-hydroxylase (CYP21A2) (Homo sapiens (Human)).